Here is a 246-residue protein sequence, read N- to C-terminus: Putative pectinesterase 57 (246 aa).

N-linked (GlcNAc...) asparagine glycosylation is found at Asn127 and Asn143. Thr152 lines the substrate pocket. Asn174 carries N-linked (GlcNAc...) asparagine glycosylation. Asp205 serves as the catalytic Proton donor. Asp226 (nucleophile) is an active-site residue.

This sequence belongs to the pectinesterase family.

The catalysed reaction is [(1-&gt;4)-alpha-D-galacturonosyl methyl ester](n) + n H2O = [(1-&gt;4)-alpha-D-galacturonosyl](n) + n methanol + n H(+). It functions in the pathway glycan metabolism; pectin degradation; 2-dehydro-3-deoxy-D-gluconate from pectin: step 1/5. Acts in the modification of cell walls via demethylesterification of cell wall pectin. This Arabidopsis thaliana (Mouse-ear cress) protein is Putative pectinesterase 57 (PME57).